The sequence spans 231 residues: Adenosylcobinamide-GDP ribazoletransferase (231 aa).

The next 5 membrane-spanning stretches (helical) occupy residues leucine 28–isoleucine 48, threonine 97–tyrosine 117, phenylalanine 121–leucine 141, valine 162–alanine 182, and valine 209–glycine 229.

Belongs to the CobS family. The cofactor is Mg(2+).

The protein resides in the cell membrane. It catalyses the reaction alpha-ribazole + adenosylcob(III)inamide-GDP = adenosylcob(III)alamin + GMP + H(+). The catalysed reaction is alpha-ribazole 5'-phosphate + adenosylcob(III)inamide-GDP = adenosylcob(III)alamin 5'-phosphate + GMP + H(+). It participates in cofactor biosynthesis; adenosylcobalamin biosynthesis; adenosylcobalamin from cob(II)yrinate a,c-diamide: step 7/7. Functionally, joins adenosylcobinamide-GDP and alpha-ribazole to generate adenosylcobalamin (Ado-cobalamin). Also synthesizes adenosylcobalamin 5'-phosphate from adenosylcobinamide-GDP and alpha-ribazole 5'-phosphate. The polypeptide is Adenosylcobinamide-GDP ribazoletransferase (cobS2) (Archaeoglobus fulgidus (strain ATCC 49558 / DSM 4304 / JCM 9628 / NBRC 100126 / VC-16)).